Reading from the N-terminus, the 918-residue chain is Hexokinase-1 (918 aa).

Position 1 is an N-acetylmethionine (methionine 1). Residues 1-10 form a mitochondrial-binding peptide (MBP) region; sequence MIAAQLLAYY. Hexokinase domains are found at residues 16 to 458 and 464 to 906; these read DDQV…MVTA and AEQH…LITA. Residues arginine 30 and 84 to 89 each bind ATP; that span reads DLGGSS. A hexokinase small subdomain 1 region spans residues 73–207; that stretch reads DGSEKGDFIA…DYDANIVAVV (135 aa). Residue 84 to 88 participates in D-glucose 6-phosphate binding; it reads DLGGS. D-glucose is bound by residues serine 155, 172-173, and 208-209; these read TK and ND. The segment at 208 to 447 is hexokinase large subdomain 1; the sequence is NDTVGTMMTC…SDVRFLLSES (240 aa). D-glucose 6-phosphate-binding residues include aspartate 209 and threonine 232. D-glucose is bound by residues asparagine 235, glutamate 260, and 291–294; that span reads QLFE. Serine 337 is subject to Phosphoserine. Residue 413–415 participates in D-glucose 6-phosphate binding; the sequence is DGS. ATP is bound at residue 425–426; sequence RR. D-glucose 6-phosphate is bound by residues threonine 449, 532 to 536, and serine 603; that span reads DLGGT. The segment at 521–655 is hexokinase small subdomain 2; the sequence is DGTEHGDFLA…EFDLDVVAVV (135 aa). Residue 532 to 537 participates in ATP binding; the sequence is DLGGTN. Residues 620–621 and 656–657 each bind D-glucose; these read TK and ND. The hexokinase large subdomain 2 stretch occupies residues 656-895; the sequence is NDTVGTMMTC…CTVSFLLSED (240 aa). D-glucose 6-phosphate contacts are provided by aspartate 657 and threonine 680. Threonine 680 contributes to the ATP binding site. D-glucose is bound by residues asparagine 683, glutamate 708, and glutamate 742. ATP is bound by residues 747–748, 784–788, and 863–867; these read GM, TKFLS, and TLYKL. Residues 861 to 863 and serine 897 each bind D-glucose 6-phosphate; that span reads DGT.

This sequence belongs to the hexokinase family. In terms of assembly, monomer. Interacts with RABL2/RABL2A; binds preferentially to GTP-bound RABL2. Interacts with VDAC1. The HK1-VDAC1 complex interacts with ATF2. Interacts (via N-terminal spermatogenic cell-specific region) with PFKM (via C-terminus). Interacts with SMAD5. In terms of tissue distribution, expressed in flagella of epididymal sperm.

The protein resides in the mitochondrion outer membrane. Its subcellular location is the cytoplasm. The protein localises to the cytosol. The enzyme catalyses a D-hexose + ATP = a D-hexose 6-phosphate + ADP + H(+). It carries out the reaction D-fructose + ATP = D-fructose 6-phosphate + ADP + H(+). It catalyses the reaction D-glucose + ATP = D-glucose 6-phosphate + ADP + H(+). The catalysed reaction is D-mannose + ATP = D-mannose 6-phosphate + ADP + H(+). The enzyme catalyses D-glucosamine + ATP = D-glucosamine 6-phosphate + ADP + H(+). The protein operates within carbohydrate metabolism; hexose metabolism. It functions in the pathway carbohydrate degradation; glycolysis; D-glyceraldehyde 3-phosphate and glycerone phosphate from D-glucose: step 1/4. Its activity is regulated as follows. Hexokinase is an allosteric enzyme inhibited by its product D-glucose 6-phosphate. Hexokinase activity is inhibited by N-acetyl-D-glucosamine. Functionally, catalyzes the phosphorylation of various hexoses, such as D-glucose, D-glucosamine, D-fructose, D-mannose and 2-deoxy-D-glucose, to hexose 6-phosphate (D-glucose 6-phosphate, D-glucosamine 6-phosphate, D-fructose 6-phosphate, D-mannose 6-phosphate and 2-deoxy-D-glucose 6-phosphate, respectively). Mediates the initial step of glycolysis by catalyzing phosphorylation of D-glucose to D-glucose 6-phosphate. Involved in innate immunity and inflammation by acting as a pattern recognition receptor for bacterial peptidoglycan. When released in the cytosol, N-acetyl-D-glucosamine component of bacterial peptidoglycan inhibits the hexokinase activity of HK1 and causes its dissociation from mitochondrial outer membrane, thereby activating the NLRP3 inflammasome. This is Hexokinase-1 from Rattus norvegicus (Rat).